Consider the following 179-residue polypeptide: Probable protein archease (179 aa).

Residues aspartate 55, aspartate 178, and valine 179 each coordinate Ca(2+).

This sequence belongs to the archease family.

Its function is as follows. Activates the tRNA-splicing ligase complex by facilitating the enzymatic turnover of catalytic subunit RtcB. Acts by promoting the guanylylation of RtcB, a key intermediate step in tRNA ligation. Can also alter the NTP specificity of RtcB such that ATP, dGTP or ITP is used efficiently. The polypeptide is Probable protein archease (Mycobacterium tuberculosis (strain CDC 1551 / Oshkosh)).